Here is a 557-residue protein sequence, read N- to C-terminus: Acetylcholine receptor subunit alpha-L1 (557 aa).

The N-terminal stretch at 1 to 23 is a signal peptide; it reads MAAALPPMLLLLLLLLLHHPAAA. Residues 24–244 are Extracellular-facing; it reads NPDAKRLYDD…NITLRRKTLF (221 aa). N-linked (GlcNAc...) asparagine glycosylation occurs at asparagine 47. 2 disulfide bridges follow: cysteine 151/cysteine 165 and cysteine 224/cysteine 225. A glycan (N-linked (GlcNAc...) asparagine) is linked at asparagine 235. Transmembrane regions (helical) follow at residues 245–266, 274–294, and 308–329; these read YTVN…VFYL, IALC…ISEI, and YLLF…VLNV. Residues 330–500 are Cytoplasmic-facing; that stretch reads HYRKPSTHKM…EFDAEDQDWG (171 aa). The helical transmembrane segment at 501–523 threads the bilayer; it reads FVAMVLDRLFLWIFTIASIVGTF.

This sequence belongs to the ligand-gated ion channel (TC 1.A.9) family. Acetylcholine receptor (TC 1.A.9.1) subfamily.

It localises to the postsynaptic cell membrane. Its subcellular location is the cell membrane. Functionally, after binding acetylcholine, the AChR responds by an extensive change in conformation that affects all subunits and leads to opening of an ion-conducting channel across the plasma membrane. This Schistocerca gregaria (Desert locust) protein is Acetylcholine receptor subunit alpha-L1.